Here is a 474-residue protein sequence, read N- to C-terminus: ATP synthase subunit beta (474 aa).

158–165 (GGAGVGKT) is an ATP binding site.

Belongs to the ATPase alpha/beta chains family. As to quaternary structure, F-type ATPases have 2 components, CF(1) - the catalytic core - and CF(0) - the membrane proton channel. CF(1) has five subunits: alpha(3), beta(3), gamma(1), delta(1), epsilon(1). CF(0) has three main subunits: a(1), b(2) and c(9-12). The alpha and beta chains form an alternating ring which encloses part of the gamma chain. CF(1) is attached to CF(0) by a central stalk formed by the gamma and epsilon chains, while a peripheral stalk is formed by the delta and b chains.

The protein localises to the cell membrane. The catalysed reaction is ATP + H2O + 4 H(+)(in) = ADP + phosphate + 5 H(+)(out). Produces ATP from ADP in the presence of a proton gradient across the membrane. The catalytic sites are hosted primarily by the beta subunits. In Tropheryma whipplei (strain Twist) (Whipple's bacillus), this protein is ATP synthase subunit beta.